Here is a 96-residue protein sequence, read N- to C-terminus: Large ribosomal subunit protein eL14 (96 aa).

This sequence belongs to the eukaryotic ribosomal protein eL14 family.

This chain is Large ribosomal subunit protein eL14, found in Staphylothermus marinus (strain ATCC 43588 / DSM 3639 / JCM 9404 / F1).